Consider the following 417-residue polypeptide: Pre-mRNA-splicing factor PRP46 (417 aa).

WD repeat units follow at residues 119–159, 162–201, 209–248, 251–290, 293–334, 337–376, and 385–417; these read AHQG…LKAT, GHIM…SSSG, GHVG…EIMV, GHRS…TQLA, HHSK…NEFG, GENK…LLQS, and STES…WGEE.

Belongs to the WD repeat PRL1/PRL2 family. Associated with the spliceosome.

Its subcellular location is the cytoplasm. It localises to the nucleus. In terms of biological role, involved in pre-mRNA splicing and required for cell cycle progression at G2/M. The sequence is that of Pre-mRNA-splicing factor PRP46 (PRP46) from Debaryomyces hansenii (strain ATCC 36239 / CBS 767 / BCRC 21394 / JCM 1990 / NBRC 0083 / IGC 2968) (Yeast).